The following is a 188-amino-acid chain: Chitin synthase 1 (188 aa).

This sequence belongs to the chitin synthase family. Class I subfamily.

Its subcellular location is the cell membrane. The enzyme catalyses [(1-&gt;4)-N-acetyl-beta-D-glucosaminyl](n) + UDP-N-acetyl-alpha-D-glucosamine = [(1-&gt;4)-N-acetyl-beta-D-glucosaminyl](n+1) + UDP + H(+). In terms of biological role, polymerizes chitin, a structural polymer of the cell wall and septum, by transferring the sugar moiety of UDP-GlcNAc to the non-reducing end of the growing chitin polymer. The chain is Chitin synthase 1 (CHS1) from Ajellomyces dermatitidis (Blastomyces dermatitidis).